The sequence spans 301 residues: uncharacterized protein (301 aa).

A Radical SAM core domain is found at 45-286; the sequence is KELSDGWALN…EELGKMFTEL (242 aa).

This is an uncharacterized protein from Acidianus two-tailed virus (ATV).